The following is a 29-amino-acid chain: Cytochrome b6-f complex subunit 8 (29 aa).

The chain crosses the membrane as a helical span at residues 3 to 23 (IVSLGWAFLMVVFSFSLSLVV).

The protein belongs to the PetN family. As to quaternary structure, the 4 large subunits of the cytochrome b6-f complex are cytochrome b6, subunit IV (17 kDa polypeptide, PetD), cytochrome f and the Rieske protein, while the 4 small subunits are PetG, PetL, PetM and PetN. The complex functions as a dimer.

The protein localises to the plastid. It localises to the chloroplast thylakoid membrane. Its function is as follows. Component of the cytochrome b6-f complex, which mediates electron transfer between photosystem II (PSII) and photosystem I (PSI), cyclic electron flow around PSI, and state transitions. In Chlorokybus atmophyticus (Soil alga), this protein is Cytochrome b6-f complex subunit 8.